A 225-amino-acid polypeptide reads, in one-letter code: Testis-expressed protein 30 (225 aa).

This Mus musculus (Mouse) protein is Testis-expressed protein 30 (Tex30).